We begin with the raw amino-acid sequence, 89 residues long: Small ribosomal subunit protein uS15 (89 aa).

Basic and acidic residues predominate over residues 1-21; that stretch reads MALSPEKKNEIIENFKTHEGD. Positions 1–23 are disordered; the sequence is MALSPEKKNEIIENFKTHEGDTG.

Belongs to the universal ribosomal protein uS15 family. In terms of assembly, part of the 30S ribosomal subunit. Forms a bridge to the 50S subunit in the 70S ribosome, contacting the 23S rRNA.

Functionally, one of the primary rRNA binding proteins, it binds directly to 16S rRNA where it helps nucleate assembly of the platform of the 30S subunit by binding and bridging several RNA helices of the 16S rRNA. Its function is as follows. Forms an intersubunit bridge (bridge B4) with the 23S rRNA of the 50S subunit in the ribosome. The sequence is that of Small ribosomal subunit protein uS15 from Desulforamulus reducens (strain ATCC BAA-1160 / DSM 100696 / MI-1) (Desulfotomaculum reducens).